The primary structure comprises 547 residues: Chaperonin GroEL (547 aa).

Residues 30-33 (TLGP), 87-91 (DGTTT), glycine 414, 478-480 (DAL), and aspartate 494 each bind ATP.

This sequence belongs to the chaperonin (HSP60) family. Forms a cylinder of 14 subunits composed of two heptameric rings stacked back-to-back. Interacts with the co-chaperonin GroES.

It is found in the cytoplasm. It catalyses the reaction ATP + H2O + a folded polypeptide = ADP + phosphate + an unfolded polypeptide.. In terms of biological role, together with its co-chaperonin GroES, plays an essential role in assisting protein folding. The GroEL-GroES system forms a nano-cage that allows encapsulation of the non-native substrate proteins and provides a physical environment optimized to promote and accelerate protein folding. The protein is Chaperonin GroEL of Desulforudis audaxviator (strain MP104C).